Here is a 782-residue protein sequence, read N- to C-terminus: Coiled-coil alpha-helical rod protein 1 (782 aa).

2 stretches are compositionally biased toward basic and acidic residues: residues 62–74 and 208–218; these read ERDV…EPGR and ETRRAGEAKEL. 2 disordered regions span residues 62-82 and 177-218; these read ERDV…WGLE and EQLS…AKEL. 3 coiled-coil regions span residues 111 to 303, 344 to 437, and 498 to 691; these read LRET…SLTH, LMVQ…NAVS, and VTDV…QQEG.

Found in all tissues tested, abundantly expressed in heart, liver, skeletal muscle, kidney and pancreas, and to a lesser extent in lung and placenta. Overexpressed in keratinocytes of psoriatic lesions.

The protein resides in the cytoplasm. It is found in the nucleus. In terms of biological role, may be a regulator of keratinocyte proliferation or differentiation. This Homo sapiens (Human) protein is Coiled-coil alpha-helical rod protein 1 (CCHCR1).